We begin with the raw amino-acid sequence, 158 residues long: Putative ribonucleoside-diphosphate reductase small chain B (158 aa).

Belongs to the ribonucleoside diphosphate reductase small chain family.

This chain is Putative ribonucleoside-diphosphate reductase small chain B (RNR2B), found in Arabidopsis thaliana (Mouse-ear cress).